The chain runs to 214 residues: MTSKGSQEEYDYLYKIVLIGDSGVGKSNLLSRFTRNEFSLETKSTIGVEFATRTIQTEGKTIKAQVWDTAGQERYRAITSAYYRGAVGALLVYDIAKQATYKSVERWILELRENADRNIEIMLVGNKSDLRHLREVSTDEAKEFSEKHKLTFIETSALDSSNVELAFQNILTQIYHIMSRPSHSTGPQTTIDSNTETIILPTTSEPPAAKSGCC.

GTP is bound by residues 20–28 (GDSGVGKSN), 39–45 (SLETKST), 68–72 (DTAGQ), 126–129 (NKSD), and 156–158 (SAL). Residues 42–50 (TKSTIGVEF) carry the Effector region motif. Residues cysteine 213 and cysteine 214 are each lipidated (S-geranylgeranyl cysteine).

This sequence belongs to the small GTPase superfamily. Rab family.

The protein resides in the contractile vacuole membrane. Functionally, required for normal contractile vacuole structure and function. Cells expressing a dominant negative rab11A exhibit a more extensive contractile vacuole network and enlarged contractile vacuole bladders. These cells exhibit a functional defect in osmotic regulation where cells immersed in water become rounded and detach from the surface, and contain swollen contractile vacuoles. This chain is Ras-related protein Rab-11A (rab11A), found in Dictyostelium discoideum (Social amoeba).